We begin with the raw amino-acid sequence, 252 residues long: Chitooligosaccharide deacetylase (252 aa).

Positions 61 and 125 each coordinate Mg(2+).

This sequence belongs to the YdjC deacetylase family. ChbG subfamily. As to quaternary structure, homodimer. Mg(2+) serves as cofactor.

It is found in the cytoplasm. The catalysed reaction is N,N'-diacetylchitobiose + H2O = N-acetyl-beta-D-glucosaminyl-(1-&gt;4)-D-glucosamine + acetate. The enzyme catalyses diacetylchitobiose-6'-phosphate + H2O = N'-monoacetylchitobiose-6'-phosphate + acetate. It participates in glycan degradation; chitin degradation. In terms of biological role, involved in the degradation of chitin. ChbG is essential for growth on the acetylated chitooligosaccharides chitobiose and chitotriose but is dispensable for growth on cellobiose and chitosan dimer, the deacetylated form of chitobiose. Deacetylation of chitobiose-6-P and chitotriose-6-P is necessary for both the activation of the chb promoter by the regulatory protein ChbR and the hydrolysis of phosphorylated beta-glucosides by the phospho-beta-glucosidase ChbF. Catalyzes the removal of only one acetyl group from chitobiose-6-P to yield monoacetylchitobiose-6-P, the inducer of ChbR and the substrate of ChbF. The sequence is that of Chitooligosaccharide deacetylase from Shigella flexneri serotype 5b (strain 8401).